We begin with the raw amino-acid sequence, 369 residues long: Histidinol-phosphate aminotransferase 3 (369 aa).

K220 is modified (N6-(pyridoxal phosphate)lysine).

It belongs to the class-II pyridoxal-phosphate-dependent aminotransferase family. Histidinol-phosphate aminotransferase subfamily. In terms of assembly, homodimer. Pyridoxal 5'-phosphate serves as cofactor.

The catalysed reaction is L-histidinol phosphate + 2-oxoglutarate = 3-(imidazol-4-yl)-2-oxopropyl phosphate + L-glutamate. The protein operates within amino-acid biosynthesis; L-histidine biosynthesis; L-histidine from 5-phospho-alpha-D-ribose 1-diphosphate: step 7/9. This is Histidinol-phosphate aminotransferase 3 (hisC3) from Mesorhizobium japonicum (strain LMG 29417 / CECT 9101 / MAFF 303099) (Mesorhizobium loti (strain MAFF 303099)).